Here is a 506-residue protein sequence, read N- to C-terminus: Maturase K (506 aa).

This sequence belongs to the intron maturase 2 family. MatK subfamily.

The protein localises to the plastid. Its subcellular location is the chloroplast. In terms of biological role, usually encoded in the trnK tRNA gene intron. Probably assists in splicing its own and other chloroplast group II introns. This is Maturase K from Rhododendron hippophaeoides (Rhododendron).